Here is a 985-residue protein sequence, read N- to C-terminus: Cation channel sperm-associated auxiliary subunit epsilon (985 aa).

The signal sequence occupies residues 1–35 (MPSAGQRKPGSLLALQALQKWLLRGGVGAMLARQV). Residues 36–937 (VAALLLWLSC…ESLGMIPRSS (902 aa)) are Extracellular-facing. Cystine bridges form between Cys87–Cys101, Cys130–Cys235, Cys275–Cys365, and Cys439–Cys442. N-linked (GlcNAc...) asparagine glycosylation is found at Asn91, Asn143, and Asn292. Residues Asn502, Asn517, and Asn565 are each glycosylated (N-linked (GlcNAc...) asparagine). Disulfide bonds link Cys617–Cys724, Cys737–Cys919, Cys753–Cys786, and Cys838–Cys869. The N-linked (GlcNAc...) asparagine glycan is linked to Asn749. Asn830 carries an N-linked (GlcNAc...) asparagine glycan. Residues Asn888, Asn915, and Asn920 are each glycosylated (N-linked (GlcNAc...) asparagine). A helical transmembrane segment spans residues 938–958 (VYLVAALIFVLMLTFISILVL). Residues 959 to 985 (SYFWYLKIYRQFIIEPLHKRPAKQKKN) are Cytoplasmic-facing.

It belongs to the CATSPERD family. As to quaternary structure, component of the CatSper complex or CatSpermasome composed of the core pore-forming members CATSPER1, CATSPER2, CATSPER3 and CATSPER4 as well as auxiliary members CATSPERB, CATSPERG2, CATSPERD, CATSPERE, CATSPERZ, C2CD6/CATSPERT, SLCO6C1, TMEM249, TMEM262 and EFCAB9. HSPA1 may be an additional auxiliary complex member. The core complex members CATSPER1, CATSPER2, CATSPER3 and CATSPER4 form a heterotetrameric channel. The auxiliary CATSPERB, CATSPERG2, CATSPERD and CATSPERE subunits form a pavilion-like structure over the pore which stabilizes the complex through interactions with CATSPER4, CATSPER3, CATSPER1 and CATSPER2 respectively. SLCO6C1 interacts with CATSPERE and TMEM262/CATSPERH interacts with CATSPERB, further stabilizing the complex. C2CD6/CATSPERT interacts at least with CATSPERD and is required for targeting the CatSper complex in the flagellar membrane. Testis-specific.

It localises to the cell projection. Its subcellular location is the cilium. The protein resides in the flagellum membrane. Auxiliary component of the CatSper complex, a complex involved in sperm cell hyperactivation. Sperm cell hyperactivation is needed for sperm motility which is essential late in the preparation of sperm for fertilization. This Mus musculus (Mouse) protein is Cation channel sperm-associated auxiliary subunit epsilon.